The following is a 311-amino-acid chain: MSYQDLKECKIITAFITPFHEDGSINFDAIPALIEHLLDHHTDGILLAGTTAESPTLTHDEELELFAAVQKIVNGRVPLIAGVGTNDTRDSIEFVKEVAEFGGFAAGLAIVPYYNKPSQEGMYQHFKAIADASDLPIIIYNIPGRVVVELTPETMLRLADHPNIIGVKECTSLANMAYLIEHKPEEFLVYTGEDGDAFHAMNLGADGVISVASHTNGDEMHEMFTAIAESDMKKAAAIQRKFIPKVNALFSYPSPAPVKAVLNYMGFEAGPTRLPLVPAPEEDAKRIIKVVVDGDYEATKATVTGVLRPDY.

Thr51 is a binding site for pyruvate. Tyr140 acts as the Proton donor/acceptor in catalysis. Residue Lys168 is the Schiff-base intermediate with substrate of the active site. Ile209 lines the pyruvate pocket.

This sequence belongs to the DapA family. As to quaternary structure, homotetramer; dimer of dimers.

Its subcellular location is the cytoplasm. The catalysed reaction is L-aspartate 4-semialdehyde + pyruvate = (2S,4S)-4-hydroxy-2,3,4,5-tetrahydrodipicolinate + H2O + H(+). It functions in the pathway amino-acid biosynthesis; L-lysine biosynthesis via DAP pathway; (S)-tetrahydrodipicolinate from L-aspartate: step 3/4. In terms of biological role, catalyzes the condensation of (S)-aspartate-beta-semialdehyde [(S)-ASA] and pyruvate to 4-hydroxy-tetrahydrodipicolinate (HTPA). This Streptococcus pneumoniae (strain CGSP14) protein is 4-hydroxy-tetrahydrodipicolinate synthase.